The sequence spans 492 residues: Auxin transporter-like protein 1 (492 aa).

The Cytoplasmic segment spans residues 1-67 (MVPREQAEEA…DAWFSCASNQ (67 aa)). The chain crosses the membrane as a helical span at residues 68–85 (VAQVLLTLPYSFSQLGML). Residues 86 to 87 (SG) lie on the Extracellular side of the membrane. A helical transmembrane segment spans residues 88-108 (VLLQLFYGFMGSWTAYLISVL). At 109–143 (YVEYRSRKEKEGVSFKNHVIQWFEVLDGLLGPYWK) the chain is on the cytoplasmic side. Residues 144–164 (AAGLAFNCTFLLFGSVIQLIA) traverse the membrane as a helical segment. At 165-180 (CASNIYYINDRLDKRT) the chain is on the extracellular side. A helical transmembrane segment spans residues 181 to 201 (WTYIFGACCATTVFIPSFHNY). A topological domain (cytoplasmic) is located at residue Arg202. A helical membrane pass occupies residues 203 to 223 (IWSFLGLGMTTYTAWYLAIAA). The Extracellular portion of the chain corresponds to 224–240 (LLNGQAEGITHTGPTKL). A helical transmembrane segment spans residues 241 to 261 (VLYFTGATNILYTFGGHAVTV). At 262–274 (EIMHAMWKPAKFK) the chain is on the cytoplasmic side. A helical membrane pass occupies residues 275 to 295 (YIYLLATLYVFTLTLPSASAM). The Extracellular portion of the chain corresponds to 296-322 (YWAFGDELLTHSNAFSLLPKTGWRDAA). A helical membrane pass occupies residues 323 to 343 (VILMLIHQFITFGFACTPLYF). At 344–364 (VWEKVIGMHDTKSICLRALAR) the chain is on the cytoplasmic side. Residues 365–385 (LPIVVPIWFLAIIFPFFGPIN) form a helical membrane-spanning segment. Ser386 is a topological domain (extracellular). The helical transmembrane segment at 387–407 (AVGALLVSFTVYIIPALAHIL) threads the bilayer. At 408 to 432 (TYRTASARMNAAEKPPFFLPSWTGM) the chain is on the cytoplasmic side. The chain crosses the membrane as a helical span at residues 433 to 453 (FVLNMFIVVWVLVVGFGLGGW). Over 454 to 492 (ASMVNFIRQIDTFGLFAKCYQCPKPAPALAQSPVPLPHH) the chain is Extracellular.

Belongs to the amino acid/polyamine transporter 2 family. Amino acid/auxin permease (AAAP) (TC 2.A.18.1) subfamily.

Its subcellular location is the cell membrane. Functionally, carrier protein involved in proton-driven auxin influx. May mediate the formation of auxin gradient from developing leaves (site of auxin biosynthesis) to tips. This chain is Auxin transporter-like protein 1, found in Oryza sativa subsp. japonica (Rice).